A 360-amino-acid polypeptide reads, in one-letter code: Phospho-N-acetylmuramoyl-pentapeptide-transferase (360 aa).

The next 10 helical transmembrane spans lie at 21–41 (YVTFRAILGLLTAMVFSLWWG), 74–94 (MGGLLILAGVFISVLLWGDLG), 97–117 (YVWVMLFVLGAFGLIGFIDDY), 134–154 (YILQSLAALAIAFYLYASAGS), 168–188 (VMPQLGAFFILLAYFTIVGSS), 199–219 (GLAIMPTVMVAAAFALIAYLS), 236–256 (SGELVIVCTAIVGAGLGFLWF), 263–283 (VFMGDVGSLSLGAALGTIAVL), 288–308 (ILLVIMGGVFVMETVSVILQV), and 338–358 (VIVRFWIISLFLVLLGLATLK).

Belongs to the glycosyltransferase 4 family. MraY subfamily. It depends on Mg(2+) as a cofactor.

It localises to the cell inner membrane. It carries out the reaction UDP-N-acetyl-alpha-D-muramoyl-L-alanyl-gamma-D-glutamyl-meso-2,6-diaminopimeloyl-D-alanyl-D-alanine + di-trans,octa-cis-undecaprenyl phosphate = di-trans,octa-cis-undecaprenyl diphospho-N-acetyl-alpha-D-muramoyl-L-alanyl-D-glutamyl-meso-2,6-diaminopimeloyl-D-alanyl-D-alanine + UMP. It functions in the pathway cell wall biogenesis; peptidoglycan biosynthesis. In terms of biological role, catalyzes the initial step of the lipid cycle reactions in the biosynthesis of the cell wall peptidoglycan: transfers peptidoglycan precursor phospho-MurNAc-pentapeptide from UDP-MurNAc-pentapeptide onto the lipid carrier undecaprenyl phosphate, yielding undecaprenyl-pyrophosphoryl-MurNAc-pentapeptide, known as lipid I. The polypeptide is Phospho-N-acetylmuramoyl-pentapeptide-transferase (Shewanella loihica (strain ATCC BAA-1088 / PV-4)).